Reading from the N-terminus, the 371-residue chain is MTLTAHLSYFLVLLLAGQGLSDSLLTKDAGPRPLELKEVFKLFQIRFNRSYWNPAEYTRRLSIFAHNLAQAQRLQQEDLGTAEFGETPFSDLTEEEFGQLYGQERSPERTPNMTKKVESNTWGESVPRTCDWRKAKNIISSVKNQGSCKCCWAMAAADNIQALWRIKHQQFVDVSVQELLDCERCGNGCNGGFVWDAYLTVLNNSGLASEKDYPFQGDRKPHRCLAKKYKKVAWIQDFTMLSNNEQAIAHYLAVHGPITVTINMKLLQHYQKGVIKATPSSCDPRQVDHSVLLVGFGKEKEGMQTGTVLSHSRKRRHSSPYWILKNSWGAHWGEKGYFRLYRGNNTCGVTKYPFTAQVDSPVKKARTSCPP.

The N-terminal stretch at 1-21 (MTLTAHLSYFLVLLLAGQGLS) is a signal peptide. The propeptide occupies 22–125 (DSLLTKDAGP…KVESNTWGES (104 aa)). Residues N48 and N112 are each glycosylated (N-linked (GlcNAc...) asparagine). Intrachain disulfides connect C148/C189, C182/C224, and C282/C347. Residue C151 is part of the active site. N203 is a glycosylation site (N-linked (GlcNAc...) asparagine). Residues H289 and N326 contribute to the active site. Residue N344 is glycosylated (N-linked (GlcNAc...) asparagine).

Belongs to the peptidase C1 family.

The protein resides in the endoplasmic reticulum. In terms of biological role, may have a specific function in the mechanism or regulation of T-cell cytolytic activity. This Mus musculus (Mouse) protein is Cathepsin W (Ctsw).